The primary structure comprises 144 residues: Large ribosomal subunit protein uL16 (144 aa).

Positions 1–19 are enriched in basic residues; sequence MLLPKRVKYRRQHRPKTTG. The segment at 1 to 26 is disordered; it reads MLLPKRVKYRRQHRPKTTGRSKGGNE.

This sequence belongs to the universal ribosomal protein uL16 family. As to quaternary structure, part of the 50S ribosomal subunit.

Binds 23S rRNA and is also seen to make contacts with the A and possibly P site tRNAs. This is Large ribosomal subunit protein uL16 from Macrococcus caseolyticus (strain JCSC5402) (Macrococcoides caseolyticum).